A 96-amino-acid chain; its full sequence is (4S)-4-hydroxy-5-phosphonooxypentane-2,3-dione isomerase (96 aa).

Positions 2 to 91 (HVTLVEINVH…MTGPRKKRLF (90 aa)) constitute an ABM domain.

The protein belongs to the LsrG family. In terms of assembly, homodimer.

It localises to the cytoplasm. The catalysed reaction is (2S)-2-hydroxy-3,4-dioxopentyl phosphate = 3-hydroxy-2,4-dioxopentyl phosphate. Its function is as follows. Involved in the degradation of phospho-AI-2, thereby terminating induction of the lsr operon and closing the AI-2 signaling cycle. Catalyzes the conversion of (4S)-4-hydroxy-5-phosphonooxypentane-2,3-dione (P-DPD) to 3-hydroxy-5-phosphonooxypentane-2,4-dione (P-HPD). This is (4S)-4-hydroxy-5-phosphonooxypentane-2,3-dione isomerase from Shigella flexneri serotype 5b (strain 8401).